The sequence spans 361 residues: Allatostatin-A receptor (361 aa).

Residues 1 to 46 lie on the Extracellular side of the membrane; that stretch reads MESTEDEFYTICLNLTAEDPSFGNCNYTTDFENGELLEKVVSRVVP. N-linked (GlcNAc...) asparagine glycosylation is found at asparagine 14 and asparagine 26. A helical transmembrane segment spans residues 47–67; the sequence is IFFGFIGIVGLVGNALVVLVV. Topologically, residues 68–78 are cytoplasmic; it reads AANPGMRSTTN. The chain crosses the membrane as a helical span at residues 79-99; sequence LLIINLAVADLLFVIFCVPFT. Residues 100–116 lie on the Extracellular side of the membrane; sequence ATDYVMPRWPFGDWWCK. A disulfide bridge connects residues cysteine 115 and cysteine 196. A helical transmembrane segment spans residues 117–137; it reads VVQYFIVVTAHASVYTLVLMS. Topologically, residues 138–158 are cytoplasmic; the sequence is LDRFMAVVHPIASMSIRTEKN. A helical membrane pass occupies residues 159-179; it reads ALLAIACIWVVILTTAIPVGI. Over 180-212 the chain is Extracellular; sequence CHGEREYSYFNRNHSSCVFLEERGYSKLGFQMS. A glycan (N-linked (GlcNAc...) asparagine) is linked at asparagine 192. The chain crosses the membrane as a helical span at residues 213–233; the sequence is FFLSSYVIPLALISVLYMCML. Residues 234–259 are Cytoplasmic-facing; that stretch reads TRLWKSAPGGRVSAESRRGRKKVTRM. Residues 260–280 traverse the membrane as a helical segment; that stretch reads VVVVVVVFAVCWCPIQIILLV. The Extracellular portion of the chain corresponds to 281 to 296; that stretch reads KALNKYHITYFTVTAQ. A helical membrane pass occupies residues 297 to 317; that stretch reads IVSHVLAYMNSCVNPVLYAFL. The Cytoplasmic portion of the chain corresponds to 318-361; that stretch reads SENFRVAFRKVMYCPPPYNDGFSGRPQATKTTRTGNGNSCHDIV. The tract at residues 341-361 is disordered; the sequence is GRPQATKTTRTGNGNSCHDIV. Positions 343–361 are enriched in polar residues; the sequence is PQATKTTRTGNGNSCHDIV.

It belongs to the G-protein coupled receptor 1 family. As to expression, expressed in the midgut and, to a lesser extent, in the fore- and hindgut of fifth instar larvae. Also highly expressed in the brain of fourth and fifth instar larvae.

It localises to the cell membrane. In terms of biological role, acts as a receptor for A-type allatostatin neuropeptide hormones. In Bombyx mori (Silk moth), this protein is Allatostatin-A receptor.